We begin with the raw amino-acid sequence, 262 residues long: UPF0739 protein C1orf74 homolog (262 aa).

It belongs to the UPF0739 family.

The protein is UPF0739 protein C1orf74 homolog of Xenopus laevis (African clawed frog).